The primary structure comprises 77 residues: Large ribosomal subunit protein eL13 (77 aa).

This sequence belongs to the eukaryotic ribosomal protein eL13 family.

This chain is Large ribosomal subunit protein eL13, found in Sulfurisphaera tokodaii (strain DSM 16993 / JCM 10545 / NBRC 100140 / 7) (Sulfolobus tokodaii).